The primary structure comprises 101 residues: Parathymosin (101 aa).

The segment at 1-101 (MSEKSVEAAA…RQKTENGASA (101 aa)) is disordered. Serine 2 carries the N-acetylserine modification. The residue at position 2 (serine 2) is a Phosphoserine. Lysine 4 is subject to N6-acetyllysine. Phosphoserine is present on residues serine 5 and serine 13. Basic and acidic residues predominate over residues 13 to 37 (SAKDLKEKKDKVEEKAGRKERKKEV). Lysine 15 carries the post-translational modification N6-acetyllysine. A compositionally biased stretch (acidic residues) spans 38–74 (VEEEENGAEEEEEETAEDGEDDDEGDEEDEEEEEEDE). Threonine 52 carries the post-translational modification Phosphothreonine. Position 91 is an N6-acetyllysine (lysine 91).

It belongs to the pro/parathymosin family.

Parathymosin may mediate immune function by blocking the effect of prothymosin alpha which confers resistance to certain opportunistic infections. This chain is Parathymosin (Ptms), found in Mus musculus (Mouse).